The following is a 438-amino-acid chain: Ribosomal protein uS12 methylthiotransferase RimO (438 aa).

One can recognise an MTTase N-terminal domain in the interval 1 to 115 (MKYFILSLGC…LDKLLADLGE (115 aa)). Residues Cys-10, Cys-46, Cys-78, Cys-150, Cys-154, and Cys-157 each coordinate [4Fe-4S] cluster. In terms of domain architecture, Radical SAM core spans 136 to 366 (KSNEVYRYIK…MEVQQEISLN (231 aa)). A TRAM domain is found at 369–437 (KALVGKKIPV…IYDLKGEFIN (69 aa)).

The protein belongs to the methylthiotransferase family. RimO subfamily. It depends on [4Fe-4S] cluster as a cofactor.

The protein resides in the cytoplasm. It carries out the reaction L-aspartate(89)-[ribosomal protein uS12]-hydrogen + (sulfur carrier)-SH + AH2 + 2 S-adenosyl-L-methionine = 3-methylsulfanyl-L-aspartate(89)-[ribosomal protein uS12]-hydrogen + (sulfur carrier)-H + 5'-deoxyadenosine + L-methionine + A + S-adenosyl-L-homocysteine + 2 H(+). Functionally, catalyzes the methylthiolation of an aspartic acid residue of ribosomal protein uS12. The chain is Ribosomal protein uS12 methylthiotransferase RimO from Carboxydothermus hydrogenoformans (strain ATCC BAA-161 / DSM 6008 / Z-2901).